We begin with the raw amino-acid sequence, 458 residues long: Probable asparagine--tRNA ligase, cytoplasmic (458 aa).

It belongs to the class-II aminoacyl-tRNA synthetase family.

The protein localises to the cytoplasm. The enzyme catalyses tRNA(Asn) + L-asparagine + ATP = L-asparaginyl-tRNA(Asn) + AMP + diphosphate + H(+). In Enterocytozoon bieneusi (strain H348) (Microsporidian parasite), this protein is Probable asparagine--tRNA ligase, cytoplasmic.